We begin with the raw amino-acid sequence, 129 residues long: Transcriptional activator protein (129 aa).

Residues 1–20 (MRSSSPSQPPSIKRAHRQAK) form a disordered region. Residues 13 to 28 (KRAHRQAKKRAIRRRR) carry the Nuclear localization signal motif. Residues 33–50 (CGCSIYFHLGCAGHGFTH) fold into a zinc finger. Residues 73–118 (LFQDTQSRGPTVYQNEGIPRTDTVQPQPEESVASPQSLPELPSLDD) are disordered. Composition is skewed to polar residues over residues 74–86 (FQDTQSRGPTVYQ) and 94–109 (DTVQPQPEESVASPQS). S109 carries the phosphoserine; by host modification. A transactivation region spans residues 115-129 (SLDDVDDSFWINLFS).

It belongs to the geminiviridae transcriptional activator protein family. In terms of assembly, monomer. Homodimer. Homooligomer. Self-interaction correlates with nuclear localization and efficient activation of transcription. Monomers suppress local silencing by interacting with and inactivating host adenosine kinase 2 (ADK2) in the cytoplasm. Interacts with and inhibits host SNF1 kinase. Post-translationally, phosphorylated at Ser-109 by A.thaliana KIN10.

Its subcellular location is the host nucleus. The protein resides in the host cytoplasm. Functionally, strong activator of the late viral genes promoters. Enhances the expression of the capsid protein and nuclear shuttle protein. Acts as a suppressor of RNA-mediated gene silencing, also known as post-transcriptional gene silencing (PTGS), a mechanism of plant viral defense that limits the accumulation of viral RNAs. Suppresses the host RNA silencing by inhibiting adenosine kinase 2 (ADK2), a kinase involved in a general methylation pathway. Also suppresses the host basal defense by interacting with and inhibiting SNF1 kinase, a key regulator of cell metabolism implicated in innate antiviral defense. Determines pathogenicity. This chain is Transcriptional activator protein, found in Nicotiana tabacum (Common tobacco).